The following is a 239-amino-acid chain: Homeobox-leucine zipper protein HOX12 (239 aa).

The tract at residues 25-65 (ATSGGEQKKARQRRRRKVKPEAAAALAGESGGDEQAKKRRL) is disordered. Residues 58-117 (EQAKKRRLSDEQARFLEMSFKKERKLETPRKVQLAAELGLDAKQVAVWFQNRRARHKSKL) constitute a DNA-binding region (homeobox). The stretch at 107-168 (QNRRARHKSK…KLAAVAAATT (62 aa)) forms a coiled coil.

Belongs to the HD-ZIP homeobox family. Class I subfamily. In terms of tissue distribution, expressed in seedlings, roots, stems, leaf sheaths and panicles.

Its subcellular location is the nucleus. Probable transcription factor. The sequence is that of Homeobox-leucine zipper protein HOX12 (HOX12) from Oryza sativa subsp. japonica (Rice).